We begin with the raw amino-acid sequence, 480 residues long: Glutamate--tRNA ligase 2 (480 aa).

A 'HIGH' region motif is present at residues 15–25; that stretch reads PSPTGYLHVGG. Residues 248-252 carry the 'KMSKS' region motif; it reads RLSKR. K251 provides a ligand contact to ATP.

The protein belongs to the class-I aminoacyl-tRNA synthetase family. Glutamate--tRNA ligase type 1 subfamily. In terms of assembly, monomer.

Its subcellular location is the cytoplasm. It catalyses the reaction tRNA(Glu) + L-glutamate + ATP = L-glutamyl-tRNA(Glu) + AMP + diphosphate. Functionally, catalyzes the attachment of glutamate to tRNA(Glu) in a two-step reaction: glutamate is first activated by ATP to form Glu-AMP and then transferred to the acceptor end of tRNA(Glu). The polypeptide is Glutamate--tRNA ligase 2 (Koribacter versatilis (strain Ellin345)).